The primary structure comprises 359 residues: F-box protein At5g49610 (359 aa).

The F-box domain occupies 3–52; the sequence is NQKGALFPDEVILQILARLPVKSLFRFKSVCKSWYRLPSDKYFTSLFNQL.

Part of a SCF (SKP1-cullin-F-box) protein ligase complex. Interacts with SKP1A, SKP1B, ASK11, ASK12, ASK13 and ASK14.

It functions in the pathway protein modification; protein ubiquitination. In Arabidopsis thaliana (Mouse-ear cress), this protein is F-box protein At5g49610.